Consider the following 173-residue polypeptide: Translation initiation factor IF-3 (173 aa).

The protein belongs to the IF-3 family. As to quaternary structure, monomer.

The protein localises to the cytoplasm. In terms of biological role, IF-3 binds to the 30S ribosomal subunit and shifts the equilibrium between 70S ribosomes and their 50S and 30S subunits in favor of the free subunits, thus enhancing the availability of 30S subunits on which protein synthesis initiation begins. This is Translation initiation factor IF-3 from Parvibaculum lavamentivorans (strain DS-1 / DSM 13023 / NCIMB 13966).